Reading from the N-terminus, the 525-residue chain is Bestrophin homolog 15 (525 aa).

4 consecutive transmembrane segments (helical) span residues 36–56, 71–91, 237–257, and 273–293; these read LFMF…NLII, FDQN…VTII, LAYP…ALIA, and ILYP…VVGW.

The protein belongs to the anion channel-forming bestrophin (TC 1.A.46) family. Calcium-sensitive chloride channel subfamily. In terms of assembly, forms oligomers.

It localises to the cell membrane. Functionally, forms chloride channels. The polypeptide is Bestrophin homolog 15 (best-15) (Caenorhabditis elegans).